We begin with the raw amino-acid sequence, 49 residues long: Large ribosomal subunit protein bL32 (49 aa).

It belongs to the bacterial ribosomal protein bL32 family.

The polypeptide is Large ribosomal subunit protein bL32 (Nautilia profundicola (strain ATCC BAA-1463 / DSM 18972 / AmH)).